A 217-amino-acid polypeptide reads, in one-letter code: Small ribosomal subunit protein uS3 (217 aa).

The KH type-2 domain occupies 29-97 (ADYLHEDLAI…AQLNKLTGKQ (69 aa)).

Belongs to the universal ribosomal protein uS3 family. Part of the 30S ribosomal subunit. Forms a tight complex with proteins S10 and S14.

Binds the lower part of the 30S subunit head. Binds mRNA in the 70S ribosome, positioning it for translation. The sequence is that of Small ribosomal subunit protein uS3 from Streptococcus mutans serotype c (strain ATCC 700610 / UA159).